A 167-amino-acid polypeptide reads, in one-letter code: Putative C-type lectin-like domain family 1 (167 aa).

Residues 1–67 (MVSNFFHVIQ…KYDCPFSGTS (67 aa)) are Cytoplasmic-facing. Residues 68 to 88 (FVVFSLFLICAMAGDVVYADI) traverse the membrane as a helical; Signal-anchor for type II membrane protein segment. At 89–167 (KTVRTSPLEL…DITAMVRFNI (79 aa)) the chain is on the extracellular side. N-linked (GlcNAc...) asparagine glycans are attached at residues Asn109, Asn140, and Asn149. The C-type lectin; atypical domain occupies 116–167 (SCPAKDWKVHKGKCYWIAETKKSWNKSQNDCAINNSYLMVIQDITAMVRFNI).

Expressed in spleen, lymph node, and tonsil. Lower expression in peripheral blood, bone marrow, and colon. No expression detected in thymus. Highly expressed in dendritic and B-cells.

It localises to the cell membrane. In terms of biological role, may function in mediating immune cell-cell interactions. May act as a T-cell costimulatory molecule, enhancing anti-CD3-induced proliferation. May play a role in the interaction of dendritic cells with T-cells and the cells of the adaptive immune response. The sequence is that of Putative C-type lectin-like domain family 1 from Homo sapiens (Human).